We begin with the raw amino-acid sequence, 332 residues long: Ribosomal RNA small subunit methyltransferase H (332 aa).

S-adenosyl-L-methionine contacts are provided by residues 36 to 38, D54, F81, D102, and Q109; that span reads GGY.

This sequence belongs to the methyltransferase superfamily. RsmH family.

Its subcellular location is the cytoplasm. The enzyme catalyses cytidine(1402) in 16S rRNA + S-adenosyl-L-methionine = N(4)-methylcytidine(1402) in 16S rRNA + S-adenosyl-L-homocysteine + H(+). In terms of biological role, specifically methylates the N4 position of cytidine in position 1402 (C1402) of 16S rRNA. This chain is Ribosomal RNA small subunit methyltransferase H, found in Nitrobacter winogradskyi (strain ATCC 25391 / DSM 10237 / CIP 104748 / NCIMB 11846 / Nb-255).